Here is a 143-residue protein sequence, read N- to C-terminus: uncharacterized protein (143 aa).

This is an uncharacterized protein from Archaeoglobus fulgidus (strain ATCC 49558 / DSM 4304 / JCM 9628 / NBRC 100126 / VC-16).